The sequence spans 348 residues: UDP-glucose 4-epimerase (348 aa).

NAD(+) is bound by residues 12–14, 33–37, 66–67, F88, and K92; these read GYI, DNFHN, and DI. 132 to 134 provides a ligand contact to substrate; sequence SAT. Y157 acts as the Proton acceptor in catalysis. Residues K161 and Y185 each coordinate NAD(+). Substrate contacts are provided by residues 185-187, 206-208, 224-226, R239, and 300-303; these read YFN, NNL, NVF, and REGD.

The protein belongs to the NAD(P)-dependent epimerase/dehydratase family. In terms of assembly, homodimer. Requires NAD(+) as cofactor.

It catalyses the reaction UDP-alpha-D-glucose = UDP-alpha-D-galactose. The enzyme catalyses UDP-N-acetyl-alpha-D-glucosamine = UDP-N-acetyl-alpha-D-galactosamine. It functions in the pathway carbohydrate metabolism; galactose metabolism. In terms of biological role, catalyzes two distinct but analogous reactions: the reversible epimerization of UDP-glucose to UDP-galactose and the reversible epimerization of UDP-N-acetylglucosamine to UDP-N-acetylgalactosamine. The reaction with UDP-Gal plays a critical role in the Leloir pathway of galactose catabolism in which galactose is converted to the glycolytic intermediate glucose 6-phosphate. It contributes to the catabolism of dietary galactose and enables the endogenous biosynthesis of both UDP-Gal and UDP-GalNAc when exogenous sources are limited. Both UDP-sugar interconversions are important in the synthesis of glycoproteins and glycolipids. The polypeptide is UDP-glucose 4-epimerase (Homo sapiens (Human)).